Reading from the N-terminus, the 278-residue chain is HTH-type transcriptional activator RhaS (278 aa).

The region spanning 174–272 (NQLMAWLEDH…NWSPRDIRQG (99 aa)) is the HTH araC/xylS-type domain. 2 DNA-binding regions (H-T-H motif) span residues 191 to 212 (EAVA…KQHT) and 239 to 262 (VTEI…RREF).

As to quaternary structure, binds DNA as a dimer.

The protein resides in the cytoplasm. Functionally, activates expression of the rhaBAD and rhaT operons. This is HTH-type transcriptional activator RhaS from Salmonella agona (strain SL483).